We begin with the raw amino-acid sequence, 127 residues long: Large ribosomal subunit protein bL17 (127 aa).

This sequence belongs to the bacterial ribosomal protein bL17 family. In terms of assembly, part of the 50S ribosomal subunit. Contacts protein L32.

The sequence is that of Large ribosomal subunit protein bL17 from Ligilactobacillus salivarius (strain UCC118) (Lactobacillus salivarius).